The primary structure comprises 100 residues: Large ribosomal subunit protein bL27 (100 aa).

A propeptide spanning residues 1–9 is cleaved from the precursor; sequence MLVMNLQLF.

The protein belongs to the bacterial ribosomal protein bL27 family. In terms of processing, the N-terminus is cleaved by ribosomal processing cysteine protease Prp.

The chain is Large ribosomal subunit protein bL27 from Clostridium botulinum (strain Hall / ATCC 3502 / NCTC 13319 / Type A).